Consider the following 338-residue polypeptide: Flap endonuclease 1 (338 aa).

An N-domain region spans residues 1–98; that stretch reads MGTDIGDLLL…DTLAKRHEVR (98 aa). Asp27, Asp80, Glu152, Glu154, Asp173, Asp175, and Asp236 together coordinate Mg(2+). Positions 116–257 are I-domain; sequence EAYKYAQASS…RALKLVKEHG (142 aa). The segment at 330-338 is interaction with PCNA; that stretch reads SQSTLDQWF.

The protein belongs to the XPG/RAD2 endonuclease family. FEN1 subfamily. In terms of assembly, interacts with PCNA. PCNA stimulates the nuclease activity without altering cleavage specificity. Mg(2+) is required as a cofactor.

Structure-specific nuclease with 5'-flap endonuclease and 5'-3' exonuclease activities involved in DNA replication and repair. During DNA replication, cleaves the 5'-overhanging flap structure that is generated by displacement synthesis when DNA polymerase encounters the 5'-end of a downstream Okazaki fragment. Binds the unpaired 3'-DNA end and kinks the DNA to facilitate 5' cleavage specificity. Cleaves one nucleotide into the double-stranded DNA from the junction in flap DNA, leaving a nick for ligation. Also involved in the base excision repair (BER) pathway. Acts as a genome stabilization factor that prevents flaps from equilibrating into structures that lead to duplications and deletions. Also possesses 5'-3' exonuclease activity on nicked or gapped double-stranded DNA. This Methanococcoides burtonii (strain DSM 6242 / NBRC 107633 / OCM 468 / ACE-M) protein is Flap endonuclease 1.